The chain runs to 322 residues: Phosphoenolpyruvate transferase (322 aa).

D58 serves as a coordination point for 7,8-didemethyl-8-hydroxy-5-deazariboflavin.

It belongs to the CofD family. Homodimer. Requires Mg(2+) as cofactor.

It carries out the reaction enolpyruvoyl-2-diphospho-5'-guanosine + 7,8-didemethyl-8-hydroxy-5-deazariboflavin = dehydro coenzyme F420-0 + GMP + H(+). It participates in cofactor biosynthesis; coenzyme F420 biosynthesis. Its function is as follows. Catalyzes the transfer of the phosphoenolpyruvate moiety from enoylpyruvoyl-2-diphospho-5'-guanosine (EPPG) to 7,8-didemethyl-8-hydroxy-5-deazariboflavin (FO) with the formation of dehydro coenzyme F420-0 and GMP. The sequence is that of Phosphoenolpyruvate transferase from Thermobifida fusca (strain YX).